A 451-amino-acid polypeptide reads, in one-letter code: Phosphoglucosamine mutase (451 aa).

Ser-102 acts as the Phosphoserine intermediate in catalysis. Residues Ser-102, Asp-243, Asp-245, and Asp-247 each contribute to the Mg(2+) site. Phosphoserine is present on Ser-102.

The protein belongs to the phosphohexose mutase family. Mg(2+) is required as a cofactor. Activated by phosphorylation.

It carries out the reaction alpha-D-glucosamine 1-phosphate = D-glucosamine 6-phosphate. Functionally, catalyzes the conversion of glucosamine-6-phosphate to glucosamine-1-phosphate. The protein is Phosphoglucosamine mutase of Salinispora tropica (strain ATCC BAA-916 / DSM 44818 / JCM 13857 / NBRC 105044 / CNB-440).